Consider the following 310-residue polypeptide: Methionyl-tRNA formyltransferase (310 aa).

111-114 lines the (6S)-5,6,7,8-tetrahydrofolate pocket; it reads SLLP.

This sequence belongs to the Fmt family.

The catalysed reaction is L-methionyl-tRNA(fMet) + (6R)-10-formyltetrahydrofolate = N-formyl-L-methionyl-tRNA(fMet) + (6S)-5,6,7,8-tetrahydrofolate + H(+). Functionally, attaches a formyl group to the free amino group of methionyl-tRNA(fMet). The formyl group appears to play a dual role in the initiator identity of N-formylmethionyl-tRNA by promoting its recognition by IF2 and preventing the misappropriation of this tRNA by the elongation apparatus. The polypeptide is Methionyl-tRNA formyltransferase (Rhodopseudomonas palustris (strain BisB18)).